The sequence spans 334 residues: Hematopoietic SH2 domain-containing protein (334 aa).

Positions 34 to 125 constitute an SH2 domain; it reads WFHGTISREA…PFGELLTQAC (92 aa). 2 disordered regions span residues 157–181 and 254–280; these read EVQR…KGEF and EDSC…ATFR. Positions 258–267 are enriched in polar residues; sequence AATTSLQNPA.

As to quaternary structure, interacts with FES and TNK2. May be phosphorylated by FES and ACK1. Predominantly expressed in spleen and thymus. Appears not to be expressed in heart, brain, liver, kidney, embryo, lung and ovary.

It is found in the cytoplasm. The protein localises to the mitochondrion. Adapter protein involved in tyrosine kinase and CD28 signaling. May be a modulator of the apoptotic response through its ability to affect mitochondrial stability. In Mus musculus (Mouse), this protein is Hematopoietic SH2 domain-containing protein (Hsh2d).